The primary structure comprises 141 residues: HTH-type transcriptional repressor NsrR (141 aa).

In terms of domain architecture, HTH rrf2-type spans 2–129 (QLTNFTDYGL…DNYTLADLVE (128 aa)). A DNA-binding region (H-T-H motif) is located at residues 28–51 (ISEVTDVYGVSRNHMVKIINQLSR). The [2Fe-2S] cluster site is built by C91, C96, and C102.

[2Fe-2S] cluster serves as cofactor.

In terms of biological role, nitric oxide-sensitive repressor of genes involved in protecting the cell against nitrosative stress. May require iron for activity. This is HTH-type transcriptional repressor NsrR from Shigella boydii serotype 18 (strain CDC 3083-94 / BS512).